Reading from the N-terminus, the 238-residue chain is MGEPVYRRVVIKLSGEYFAGDQSFGIDQPTIDRIAGDLIAAQKLGVEIAVVVGGGNIFRGVEVSSRGVSRPTGDTMGMLATVMNCLALEAAIERRAVAARTLSAFVMPQVCELFTRGAAHRYLAEGKIVLLAGGTGNPFFTTDTTAVLRAGEIGAQAVLKATNVDGVYSADPKKDPSAQRFERLSHSQALEGGYKVMDATAFALARETSLPIIVFSIAEAGSIGAILSGTGRGTVVAG.

12–15 contacts ATP; that stretch reads KLSG. Glycine 54 lines the UMP pocket. ATP contacts are provided by glycine 55 and arginine 59. UMP is bound by residues aspartate 74 and 135–142; that span reads TGNPFFTT. Positions 162, 163, 168, and 171 each coordinate ATP.

It belongs to the UMP kinase family. Homohexamer.

The protein localises to the cytoplasm. It carries out the reaction UMP + ATP = UDP + ADP. Its pathway is pyrimidine metabolism; CTP biosynthesis via de novo pathway; UDP from UMP (UMPK route): step 1/1. With respect to regulation, inhibited by UTP. Its function is as follows. Catalyzes the reversible phosphorylation of UMP to UDP. The protein is Uridylate kinase of Rhodopseudomonas palustris (strain BisB18).